Here is a 232-residue protein sequence, read N- to C-terminus: Rho-related GTP-binding protein Rho6 (232 aa).

Residues 23–28, 38–45, 67–71, 125–128, and 169–170 contribute to the GTP site; these read QCGKTA, YPETYVPT, DTSGS, CKTD, and AF. An Effector region motif is present at residues 42–50; it reads YVPTVFENY. Cysteine 229 is modified (cysteine methyl ester). Cysteine 229 is lipidated: S-geranylgeranyl cysteine. A propeptide spans 230-232 (removed in mature form); it reads SIM.

This sequence belongs to the small GTPase superfamily. Rho family. As to quaternary structure, binds GRB7 and PLXNB1. Interacts with PLXNA2. Interacts with UBXD5.

It localises to the cell membrane. It is found in the cytoplasm. The protein localises to the cytoskeleton. In terms of biological role, lacks intrinsic GTPase activity. Has a low affinity for GDP, and constitutively binds GTP. Controls rearrangements of the actin cytoskeleton. Induces the Rac-dependent neuritic process formation in part by disruption of the cortical actin filaments. Causes the formation of many neuritic processes from the cell body with disruption of the cortical actin filaments. The protein is Rho-related GTP-binding protein Rho6 (Rnd1) of Mus musculus (Mouse).